The following is a 231-amino-acid chain: Acyltransferase PGAP2 (231 aa).

The Cytoplasmic segment spans residues 1-22; that stretch reads MQQVPYGSVDRDKPLIRVPFTR. A helical transmembrane segment spans residues 23–43; that stretch reads LAVITVCLPLLGLVACIVLAM. Topologically, residues 44–78 are lumenal; the sequence is LYHYNDATYTHCQVPNYLPSISAAISLTPERYIWR. Residues 79–99 form a helical membrane-spanning segment; that stretch reads FSIGLHSAPRFLVAAAYLSFY. Residues 100–110 are Cytoplasmic-facing; that stretch reads RGRFSRRLTEQ. A helical membrane pass occupies residues 111-131; that stretch reads LLSGFTFLLALSENVGLLLLT. Residues 132–146 are Lumenal-facing; sequence YVSSTETYSVHKSGF. A helical membrane pass occupies residues 147-167; that stretch reads ILFIGSSLFHMLCTCKLWSLI. Topologically, residues 168–179 are cytoplasmic; sequence VKYSISSEEMMS. The chain crosses the membrane as a helical span at residues 180 to 200; the sequence is YWFKLRLFLFNGGCCVLAVYF. Residues 201–231 are Lumenal-facing; that stretch reads YRRHNTYCEEGITHASRCVSIWWCCPTWPST.

Belongs to the PGAP2 family.

It localises to the golgi apparatus membrane. In terms of biological role, involved in the fatty acid remodeling steps of GPI-anchor maturation where the unsaturated acyl chain at sn-2 of inositol phosphate is replaced by a saturated stearoyl chain. May catalyze the second step of the fatty acid remodeling, by reacylating a lyso-GPI intermediate at sn-2 of inositol phosphate by a saturated chain. The fatty acid remodeling steps is critical for the integration of GPI-APs into lipid rafts. This chain is Acyltransferase PGAP2, found in Danio rerio (Zebrafish).